The chain runs to 433 residues: Staphylopine synthase (433 aa).

NADP(+) is bound by residues 9–12 (TGPV), arginine 33, 37–40 (SEKS), and aspartate 99. Histidine 216 acts as the Proton donor/acceptor in catalysis.

This sequence belongs to the staphylopine dehydrogenase family. As to quaternary structure, homodimer.

The enzyme catalyses staphylopine + NADP(+) + H2O = (2S)-2-amino-4-{[(1R)-1-carboxy-2-(1H-imidazol-4-yl)ethyl]amino}butanoate + pyruvate + NADPH + H(+). Catalyzes the NADPH-dependent reductive condensation of pyruvate to the intermediate formed by the adjacently encoded enzyme CntL, namely (2S)-2-amino-4-{[(1R)-1-carboxy-2-(1H-imidazol-4-yl)ethyl]amino}butanoate, leading to the production of staphylopine. This is the last step in the biosynthesis of the metallophore staphylopine, which is involved in the acquisition of nickel, cobalt, zinc, copper, and iron, and thus enables bacterial growth inside the host, where metal access is limited. Therefore, this enzyme probably contributes to staphylococcal virulence. Can use neither NADH nor alpha-ketoglutarate in place of NADPH and pyruvate, respectively. The sequence is that of Staphylopine synthase from Staphylococcus aureus (strain Mu50 / ATCC 700699).